A 701-amino-acid polypeptide reads, in one-letter code: Type 3 secretion system secretin (701 aa).

An N-terminal signal peptide occupies residues 1–21 (MRKALMWLPLLLIGLSPATWA). Residues 229–238 (RGNGLAGGGS) are compositionally biased toward gly residues. The tract at residues 229–252 (RGNGLAGGGSPDTPSLPMSSSGLD) is disordered. A compositionally biased stretch (polar residues) spans 240-252 (DTPSLPMSSSGLD).

The protein belongs to the bacterial secretin family. T3SS SctC subfamily. In terms of assembly, the core secretion machinery of the T3SS is composed of approximately 20 different proteins, including cytoplasmic components, a base, an export apparatus and a needle. This subunit is part of the base, which anchors the injectisome in the bacterial cell envelope. Forms a stable homooligomeric complex.

The protein resides in the cell outer membrane. Component of the type III secretion system (T3SS), also called injectisome, which is used to inject bacterial effector proteins into eukaryotic host cells. Forms a ring-shaped multimeric structure with an apparent central pore in the outer membrane. Involved in the secretion of a proteinaceous elicitor of the hypersensitivity response in plants. This is Type 3 secretion system secretin from Pseudomonas syringae pv. syringae.